The primary structure comprises 201 residues: Ribosomal RNA small subunit methyltransferase G (201 aa).

S-adenosyl-L-methionine contacts are provided by residues Gly71, Phe76, 120–121 (LE), and Arg134.

It belongs to the methyltransferase superfamily. RNA methyltransferase RsmG family.

The protein localises to the cytoplasm. It catalyses the reaction guanosine(527) in 16S rRNA + S-adenosyl-L-methionine = N(7)-methylguanosine(527) in 16S rRNA + S-adenosyl-L-homocysteine. In terms of biological role, specifically methylates the N7 position of guanine in position 527 of 16S rRNA. The sequence is that of Ribosomal RNA small subunit methyltransferase G from Rhodospirillum rubrum (strain ATCC 11170 / ATH 1.1.1 / DSM 467 / LMG 4362 / NCIMB 8255 / S1).